A 115-amino-acid polypeptide reads, in one-letter code: Pro-neuregulin-4, membrane-bound isoform (115 aa).

The Extracellular portion of the chain corresponds to 1 to 62 (MPTDHEEPCG…SSIQTKSNLF (62 aa)). Residues 5-46 (HEEPCGPSHKSFCLNGGLCYVIPTIPSPFCRCVENYTGARCE) enclose the EGF-like domain. 3 cysteine pairs are disulfide-bonded: Cys9–Cys23, Cys17–Cys34, and Cys36–Cys45. N-linked (GlcNAc...) asparagine glycosylation is present at Asn39. A helical transmembrane segment spans residues 63 to 83 (EAFVALAVLVTLIIGAFYFLC). Residues 84 to 115 (RKGHFQRASSVQYDINLVETSSTSAHHSHEQH) are Cytoplasmic-facing.

It belongs to the neuregulin family. Interacts with ERBB4. Proteolytic cleavage close to the plasma membrane on the external face leads to the release of the soluble growth factor form. Post-translationally, extensive glycosylation precedes the proteolytic cleavage.

It localises to the cell membrane. Its subcellular location is the secreted. In terms of biological role, low affinity ligand for the ERBB4 tyrosine kinase receptor. Concomitantly recruits ERBB1 and ERBB2 coreceptors, resulting in ligand-stimulated tyrosine phosphorylation and activation of the ERBB receptors. Does not bind to the ERBB1, ERBB2 and ERBB3 receptors. The protein is Pro-neuregulin-4, membrane-bound isoform (NRG4) of Homo sapiens (Human).